The sequence spans 311 residues: Probable manganese-dependent inorganic pyrophosphatase (311 aa).

Mn(2+) contacts are provided by His9, Asp13, Asp15, Asp77, His99, and Asp151.

This sequence belongs to the PPase class C family. It depends on Mn(2+) as a cofactor.

The protein resides in the cytoplasm. The catalysed reaction is diphosphate + H2O = 2 phosphate + H(+). This chain is Probable manganese-dependent inorganic pyrophosphatase, found in Streptococcus agalactiae serotype Ia (strain ATCC 27591 / A909 / CDC SS700).